The chain runs to 64 residues: Micrurotoxin 1 (64 aa).

Disulfide bonds link C3-C24, C6-C11, C17-C41, C45-C57, and C58-C63.

It belongs to the three-finger toxin family. Ancestral subfamily. In terms of tissue distribution, expressed by the venom gland.

It is found in the secreted. Functionally, allosteric modulator of the GABA(A) receptor (GABR), possibly increasing receptor affinity for the agonist, thus enhancing receptor opening and macroscopic desensitization. In vivo, intracerebroventricular injection into mice results in periods of reduced basal activity, followed by bursts of intense seizures and death. In Micrurus mipartitus (Red-tailed coral snake), this protein is Micrurotoxin 1.